Here is a 316-residue protein sequence, read N- to C-terminus: Olfactory receptor 10A7 (316 aa).

Residues 1–25 lie on the Extracellular side of the membrane; that stretch reads MICENHTRVTEFILLGFTNNPEMQV. N5 carries N-linked (GlcNAc...) asparagine glycosylation. The helical transmembrane segment at 26-46 threads the bilayer; sequence SLFIFFLAIYTVTLLGNFLIV. The Cytoplasmic portion of the chain corresponds to 47-54; the sequence is TVTSVDLA. Residues 55 to 75 form a helical membrane-spanning segment; the sequence is LQTPMYFFLQNLSLLEVCFTL. Residues 76–99 are Extracellular-facing; that stretch reads VMVPKMLVDLVSPRKIISFVGCGT. A helical transmembrane segment spans residues 100-120; that stretch reads QMYFFFFFGSSECFLLSMMAY. Residues 121–139 lie on the Cytoplasmic side of the membrane; that stretch reads DRFVAICNPLHYSVIMNRS. The chain crosses the membrane as a helical span at residues 140-160; sequence LCLWMAIGSWMSGVPVSMLQT. Residues 161-197 lie on the Extracellular side of the membrane; that stretch reads AWMMALPFCGPNAVDHFFCDGPPVLKLVTVDTTMYEM. The chain crosses the membrane as a helical span at residues 198–217; it reads QALASTLLFIMFPFCLILVS. The Cytoplasmic portion of the chain corresponds to 218-237; sequence YTRIIITILRMSSATGRQKA. Residues 238-258 traverse the membrane as a helical segment; that stretch reads FSTCSSHLIVVSLFYGTASLT. Topologically, residues 259-271 are extracellular; that stretch reads YLRPKSNQSPESK. Residues 272–292 form a helical membrane-spanning segment; sequence KLVSLSYTVITPMLNPIIYGL. Over 293-316 the chain is Cytoplasmic; the sequence is RNNEVKGAVKRTITQKVLQKLDVF.

The protein belongs to the G-protein coupled receptor 1 family.

It localises to the cell membrane. Its function is as follows. Odorant receptor. In Homo sapiens (Human), this protein is Olfactory receptor 10A7 (OR10A7).